The sequence spans 705 residues: Elongation factor G (705 aa).

The region spanning 8-294 (NLYRNFGIMA…AVIDYLPSPL (287 aa)) is the tr-type G domain. GTP is bound by residues 17 to 24 (AHIDAGKT), 92 to 96 (DTPGH), and 146 to 149 (NKMD).

This sequence belongs to the TRAFAC class translation factor GTPase superfamily. Classic translation factor GTPase family. EF-G/EF-2 subfamily.

It is found in the cytoplasm. Functionally, catalyzes the GTP-dependent ribosomal translocation step during translation elongation. During this step, the ribosome changes from the pre-translocational (PRE) to the post-translocational (POST) state as the newly formed A-site-bound peptidyl-tRNA and P-site-bound deacylated tRNA move to the P and E sites, respectively. Catalyzes the coordinated movement of the two tRNA molecules, the mRNA and conformational changes in the ribosome. The protein is Elongation factor G of Ruegeria pomeroyi (strain ATCC 700808 / DSM 15171 / DSS-3) (Silicibacter pomeroyi).